The following is a 253-amino-acid chain: Bacitracin export ATP-binding protein BceA (253 aa).

An ABC transporter domain is found at 4–243; sequence LEATNIHKSY…TFFKDIMKTQ (240 aa). 40 to 47 provides a ligand contact to ATP; it reads GASGSGKT.

The protein belongs to the ABC transporter superfamily. The complex is composed of two ATP-binding proteins (BceA) and two transmembrane proteins (BceB).

Functionally, part of the ABC transporter complex BceAB (TC 3.A.1.123.5) involved in bacitracin export. Responsible for energy coupling to the transport system. The protein is Bacitracin export ATP-binding protein BceA (bceA) of Halalkalibacterium halodurans (strain ATCC BAA-125 / DSM 18197 / FERM 7344 / JCM 9153 / C-125) (Bacillus halodurans).